Reading from the N-terminus, the 316-residue chain is MDPNLQYWQNNGQSFLSRLGLWSKILDPTLLLSQAEIEEARTLIQNEENTPGKNDKVSNAWLLSLSSVHSDTGAVISPAYRPQVFLPISAPLVVGSLIAHKGIKSAMFWQFVLHTYCAGFNHANRNATATKDNKTTMKQSLLILGAVSYSTVTGALPQIILQRLRLISSLTQTICRSFLPVPLAAGLAAFNILVVRSEEAENGISLFDANGNAVGVSKEAGFKAVKETAISRATLFGTTAALPTFLMALLERAKFVQRNPRLIAPIGSMCTVITFGLMIPVSFSLFPQLGKIKKENLEKEFQSLDGNEELFYHRGL.

5 consecutive transmembrane segments (helical) span residues 83-103, 141-161, 174-194, 230-250, and 263-283; these read QVFL…HKGI, LLIL…QIIL, ICRS…NILV, ISRA…MALL, and IAPI…PVSF.

The protein belongs to the sideroflexin family.

The protein localises to the mitochondrion inner membrane. Mitochondrial amino-acid transporter. Does not act as a serine transporter: not able to mediate transport of serine into mitochondria. In Danio rerio (Zebrafish), this protein is Sideroflexin-4.